Consider the following 294-residue polypeptide: MLKGAITALITPFDHKGAIDERAFCDFVEWQITQGINGVSPVGTTGESATLSHEEHKQIIELCVEQVAKRVPVVAGAGSNSTSEAIELAQHAEKAGADAVLVVTPYYNRPNQSGLYKHFSSIAKAVSIPIIIYNIPGRSVIDMAVETMRDLYQNFNNIIGVKDATSRIERVSEQGEKCGKDFVQLSGDDCTALGFNAHGGVGCISVSSNVAPKLCAELQAACFHGDYKTARELNDRLMPLNRAVFIEPSPAGIKYAAAKLGLCGETVRSPIVPLTESTKKIIDEALSHAGLLKA.

Thr-45 contacts pyruvate. The active-site Proton donor/acceptor is Tyr-133. Residue Lys-162 is the Schiff-base intermediate with substrate of the active site. Pyruvate is bound at residue Ile-204.

This sequence belongs to the DapA family. In terms of assembly, homotetramer; dimer of dimers.

Its subcellular location is the cytoplasm. It carries out the reaction L-aspartate 4-semialdehyde + pyruvate = (2S,4S)-4-hydroxy-2,3,4,5-tetrahydrodipicolinate + H2O + H(+). It functions in the pathway amino-acid biosynthesis; L-lysine biosynthesis via DAP pathway; (S)-tetrahydrodipicolinate from L-aspartate: step 3/4. Functionally, catalyzes the condensation of (S)-aspartate-beta-semialdehyde [(S)-ASA] and pyruvate to 4-hydroxy-tetrahydrodipicolinate (HTPA). The sequence is that of 4-hydroxy-tetrahydrodipicolinate synthase from Bartonella tribocorum (strain CIP 105476 / IBS 506).